Consider the following 463-residue polypeptide: 3-phosphoshikimate 1-carboxyvinyltransferase (463 aa).

Residues lysine 26, serine 27, and arginine 31 each coordinate 3-phosphoshikimate. Lysine 26 contributes to the phosphoenolpyruvate binding site. Phosphoenolpyruvate contacts are provided by glycine 99 and arginine 127. 6 residues coordinate 3-phosphoshikimate: serine 163, serine 164, glutamine 165, serine 188, aspartate 300, and lysine 327. Residue glutamine 165 coordinates phosphoenolpyruvate. Aspartate 300 (proton acceptor) is an active-site residue. Residues arginine 331 and arginine 372 each coordinate phosphoenolpyruvate.

It belongs to the EPSP synthase family. In terms of assembly, monomer.

Its subcellular location is the cytoplasm. The enzyme catalyses 3-phosphoshikimate + phosphoenolpyruvate = 5-O-(1-carboxyvinyl)-3-phosphoshikimate + phosphate. Its pathway is metabolic intermediate biosynthesis; chorismate biosynthesis; chorismate from D-erythrose 4-phosphate and phosphoenolpyruvate: step 6/7. In terms of biological role, catalyzes the transfer of the enolpyruvyl moiety of phosphoenolpyruvate (PEP) to the 5-hydroxyl of shikimate-3-phosphate (S3P) to produce enolpyruvyl shikimate-3-phosphate and inorganic phosphate. This Burkholderia pseudomallei (Pseudomonas pseudomallei) protein is 3-phosphoshikimate 1-carboxyvinyltransferase.